The following is a 164-amino-acid chain: FMN reductase (NADH) RutF (164 aa).

It belongs to the non-flavoprotein flavin reductase family. RutF subfamily.

It catalyses the reaction FMNH2 + NAD(+) = FMN + NADH + 2 H(+). Its function is as follows. Catalyzes the reduction of FMN to FMNH2 which is used to reduce pyrimidine by RutA via the Rut pathway. The chain is FMN reductase (NADH) RutF from Escherichia coli O45:K1 (strain S88 / ExPEC).